We begin with the raw amino-acid sequence, 400 residues long: MASTERNFLLLSLVVSALSGLVHRSDAAEISFGSCTPQQSDERGQCVHITSCPYLANLLMVEPKTPAQRILLSKSQCGLDNRVEGLVNRILVCCPQSMRGNIMDSEPTPSTRDALQQGDVLPGNDVCGFLFADRIFGGTNTTLWEFPWMVLLQYKKLFSETYTFNCGGALLNSRYVLTAGHCLASRELDKSGAVLHSVRLGEWDTRTDPDCTTQMNGQRICAPKHIDIEVEKGIIHEMYAPNSVDQRNDIALVRLKRIVSYTDYVRPICLPTDGLVQNNFVDYGMDVAGWGLTENMQPSAIKLKITVNVWNLTSCQEKYSSFKVKLDDSQMCAGGQLGVDTCGGDSGGPLMVPISTGGRDVFYIAGVTSYGTKPCGLKGWPGVYTRTGAFIDWIKQKLEP.

The signal sequence occupies residues 1–27; the sequence is MASTERNFLLLSLVVSALSGLVHRSDA. In terms of domain architecture, Clip spans 34-94; it reads SCTPQQSDER…GLVNRILVCC (61 aa). 6 disulfides stabilise this stretch: Cys35-Cys93, Cys46-Cys77, Cys52-Cys94, Cys127-Cys269, Cys166-Cys182, and Cys211-Cys221. Residues 135–399 enclose the Peptidase S1 domain; it reads IFGGTNTTLW…FIDWIKQKLE (265 aa). The N-linked (GlcNAc...) asparagine glycan is linked to Asn140. The active-site Charge relay system is His181. Ca(2+)-binding residues include Glu202, Asp204, Thr207, and Asp210. The Charge relay system role is filled by Asp249. A glycan (N-linked (GlcNAc...) asparagine) is linked at Asn311. 2 disulfide bridges follow: Cys315–Cys332 and Cys342–Cys375. Ser346 functions as the Charge relay system in the catalytic mechanism.

Belongs to the peptidase S1 family. CLIP subfamily. As to quaternary structure, in the active form, heterodimer of a light chain and a heavy chain; disulfide-linked. In terms of processing, proteolytically cleaved in response to Gram-negative bacterial or fungal infection; processing is likely to result in its activation. Cleavage produces a light chain containing the CLIP domain and a catalytic heavy chain which remain covalently associated through an interchain disulfide bond.

The protein resides in the secreted. Its function is as follows. Endopeptidase which plays a key role in innate immunity by cleaving Tl ligand spz and thereby activating the Toll pathway in response to fungal and Gram-positive bacterial infections. Acts downstream of pathogen recognition receptors PGRP-SA and GNBP1 and protease grass in response to Gram-positive bacterial infection. Acts downstream of protease psh in response to fungal infection. The sequence is that of Spaetzle-processing enzyme from Drosophila melanogaster (Fruit fly).